Consider the following 47-residue polypeptide: Large ribosomal subunit protein bL34 (47 aa).

This sequence belongs to the bacterial ribosomal protein bL34 family.

This is Large ribosomal subunit protein bL34 from Rhodococcus erythropolis (strain PR4 / NBRC 100887).